The chain runs to 440 residues: Serine/threonine-protein kinase STK11 (440 aa).

Positions 49–309 (YLMGDLLGEG…IQQIRQHNWF (261 aa)) constitute a Protein kinase domain. Residues 55 to 63 (LGEGSYGKV) and K78 each bind ATP. D176 functions as the Proton acceptor in the catalytic mechanism. Phosphothreonine; by autocatalysis occurs at positions 336 and 365. Residues 370–440 (VPGQVPEEEA…IRKLSTCKQQ (71 aa)) form a disordered region. A compositionally biased stretch (basic residues) spans 430-440 (KIRKLSTCKQQ). Residue S435 is modified to Phosphoserine; by PKA.

The protein belongs to the protein kinase superfamily. CAMK Ser/Thr protein kinase family. LKB1 subfamily. Catalytic component of a trimeric complex composed of STK11/LKB1, STRAD (STRADA or STRADB) and CAB39/MO25 (CAB39/MO25alpha or CAB39L/MO25beta). Mg(2+) serves as cofactor. It depends on Mn(2+) as a cofactor. In terms of tissue distribution, ubiquitously expressed in all tissues tested. High levels were observed in duodenum and skeletal muscle, lower levels in liver and pancreas.

The protein resides in the nucleus. It is found in the cytoplasm. The catalysed reaction is L-seryl-[protein] + ATP = O-phospho-L-seryl-[protein] + ADP + H(+). It catalyses the reaction L-threonyl-[protein] + ATP = O-phospho-L-threonyl-[protein] + ADP + H(+). In terms of biological role, tumor suppressor serine/threonine-protein kinase that controls the activity of AMP-activated protein kinase (AMPK) family members, thereby playing a role in various processes such as cell metabolism, cell polarity, apoptosis and DNA damage response. Acts by phosphorylating the T-loop of AMPK family proteins, leading to promote their activity. The chain is Serine/threonine-protein kinase STK11 from Gallus gallus (Chicken).